Here is a 131-residue protein sequence, read N- to C-terminus: Ribonuclease P protein component (131 aa).

The protein belongs to the RnpA family. Consists of a catalytic RNA component (M1 or rnpB) and a protein subunit.

The enzyme catalyses Endonucleolytic cleavage of RNA, removing 5'-extranucleotides from tRNA precursor.. Its function is as follows. RNaseP catalyzes the removal of the 5'-leader sequence from pre-tRNA to produce the mature 5'-terminus. It can also cleave other RNA substrates such as 4.5S RNA. The protein component plays an auxiliary but essential role in vivo by binding to the 5'-leader sequence and broadening the substrate specificity of the ribozyme. The chain is Ribonuclease P protein component from Synechococcus sp. (strain WH7803).